We begin with the raw amino-acid sequence, 671 residues long: DNA ligase (671 aa).

Residues 31 to 35 (DAEYD), 80 to 81 (SL), and glutamate 110 contribute to the NAD(+) site. Lysine 112 functions as the N6-AMP-lysine intermediate in the catalytic mechanism. Residues arginine 133, glutamate 167, lysine 283, and lysine 307 each contribute to the NAD(+) site. Cysteine 401, cysteine 404, cysteine 419, and cysteine 424 together coordinate Zn(2+). A BRCT domain is found at 587 to 671 (EEELVFAGKT…YLPDEGGLNE (85 aa)).

It belongs to the NAD-dependent DNA ligase family. LigA subfamily. It depends on Mg(2+) as a cofactor. The cofactor is Mn(2+).

It catalyses the reaction NAD(+) + (deoxyribonucleotide)n-3'-hydroxyl + 5'-phospho-(deoxyribonucleotide)m = (deoxyribonucleotide)n+m + AMP + beta-nicotinamide D-nucleotide.. Its function is as follows. DNA ligase that catalyzes the formation of phosphodiester linkages between 5'-phosphoryl and 3'-hydroxyl groups in double-stranded DNA using NAD as a coenzyme and as the energy source for the reaction. It is essential for DNA replication and repair of damaged DNA. This is DNA ligase from Listeria monocytogenes serotype 4b (strain CLIP80459).